A 771-amino-acid chain; its full sequence is Protein translocase subunit SecA 2 (771 aa).

Residues Q91, 109–113 (GEGKT), and D496 each bind ATP.

This sequence belongs to the SecA family. As to quaternary structure, monomer and homodimer. Part of the essential Sec protein translocation apparatus which comprises SecA, SecYEG and auxiliary proteins SecDF. Other proteins may also be involved.

The protein resides in the cell membrane. It is found in the cytoplasm. The catalysed reaction is ATP + H2O + cellular proteinSide 1 = ADP + phosphate + cellular proteinSide 2.. Part of the Sec protein translocase complex. Interacts with the SecYEG preprotein conducting channel. Has a central role in coupling the hydrolysis of ATP to the transfer of proteins into and across the cell membrane, serving as an ATP-driven molecular motor driving the stepwise translocation of polypeptide chains across the membrane. The sequence is that of Protein translocase subunit SecA 2 from Corynebacterium jeikeium (strain K411).